The following is a 299-amino-acid chain: Glycine--tRNA ligase alpha subunit (299 aa).

Belongs to the class-II aminoacyl-tRNA synthetase family. In terms of assembly, tetramer of two alpha and two beta subunits.

It localises to the cytoplasm. It carries out the reaction tRNA(Gly) + glycine + ATP = glycyl-tRNA(Gly) + AMP + diphosphate. In Dichelobacter nodosus (strain VCS1703A), this protein is Glycine--tRNA ligase alpha subunit.